The primary structure comprises 513 residues: Bifunctional purine biosynthesis protein PurH (513 aa).

The 145-residue stretch at 1-145 folds into the MGS-like domain; the sequence is MNKRAIISVY…KNFKYTTVIV (145 aa).

It belongs to the PurH family.

The catalysed reaction is (6R)-10-formyltetrahydrofolate + 5-amino-1-(5-phospho-beta-D-ribosyl)imidazole-4-carboxamide = 5-formamido-1-(5-phospho-D-ribosyl)imidazole-4-carboxamide + (6S)-5,6,7,8-tetrahydrofolate. It carries out the reaction IMP + H2O = 5-formamido-1-(5-phospho-D-ribosyl)imidazole-4-carboxamide. Its pathway is purine metabolism; IMP biosynthesis via de novo pathway; 5-formamido-1-(5-phospho-D-ribosyl)imidazole-4-carboxamide from 5-amino-1-(5-phospho-D-ribosyl)imidazole-4-carboxamide (10-formyl THF route): step 1/1. It participates in purine metabolism; IMP biosynthesis via de novo pathway; IMP from 5-formamido-1-(5-phospho-D-ribosyl)imidazole-4-carboxamide: step 1/1. The sequence is that of Bifunctional purine biosynthesis protein PurH from Caldicellulosiruptor bescii (strain ATCC BAA-1888 / DSM 6725 / KCTC 15123 / Z-1320) (Anaerocellum thermophilum).